The sequence spans 486 residues: F420-non-reducing hydrogenase iron-sulfur subunit A (486 aa).

Positions 61 and 64 each coordinate Ni(2+).

It belongs to the [NiFe]/[NiFeSe] hydrogenase large subunit family. The F420-non-reducing hydrogenase is composed of three subunits; MvhA, MvhD and MvhG. It forms a complex with the heterodisulfide reductase (Hdr). It depends on Ni(2+) as a cofactor.

It localises to the cytoplasm. Its function is as follows. Part of a complex that provides reducing equivalents for heterodisulfide reductase. The chain is F420-non-reducing hydrogenase iron-sulfur subunit A (mvhA) from Archaeoglobus profundus (strain DSM 5631 / JCM 9629 / NBRC 100127 / Av18).